The sequence spans 306 residues: Acetaldehyde dehydrogenase 2/3 (306 aa).

The active-site Acyl-thioester intermediate is Cys130. Residues 161–169 (SAGPGTRKN) and Asn272 contribute to the NAD(+) site.

The protein belongs to the acetaldehyde dehydrogenase family.

It carries out the reaction acetaldehyde + NAD(+) + CoA = acetyl-CoA + NADH + H(+). The protein is Acetaldehyde dehydrogenase 2/3 (mhpF) of Azoarcus sp. (strain BH72).